A 448-amino-acid chain; its full sequence is Phosphoglucosamine mutase (448 aa).

Serine 100 serves as the catalytic Phosphoserine intermediate. Residues serine 100, aspartate 240, aspartate 242, and aspartate 244 each contribute to the Mg(2+) site. Serine 100 carries the post-translational modification Phosphoserine.

It belongs to the phosphohexose mutase family. Requires Mg(2+) as cofactor. Activated by phosphorylation.

It catalyses the reaction alpha-D-glucosamine 1-phosphate = D-glucosamine 6-phosphate. Its function is as follows. Catalyzes the conversion of glucosamine-6-phosphate to glucosamine-1-phosphate. The polypeptide is Phosphoglucosamine mutase (Clostridium acetobutylicum (strain ATCC 824 / DSM 792 / JCM 1419 / IAM 19013 / LMG 5710 / NBRC 13948 / NRRL B-527 / VKM B-1787 / 2291 / W)).